The chain runs to 172 residues: Large ribosomal subunit protein uL10 (172 aa).

This sequence belongs to the universal ribosomal protein uL10 family. As to quaternary structure, part of the ribosomal stalk of the 50S ribosomal subunit. The N-terminus interacts with L11 and the large rRNA to form the base of the stalk. The C-terminus forms an elongated spine to which L12 dimers bind in a sequential fashion forming a multimeric L10(L12)X complex.

Forms part of the ribosomal stalk, playing a central role in the interaction of the ribosome with GTP-bound translation factors. The chain is Large ribosomal subunit protein uL10 from Chelativorans sp. (strain BNC1).